The primary structure comprises 417 residues: WD repeat and FYVE domain-containing protein 2 (417 aa).

WD repeat units follow at residues 29 to 68, 119 to 157, 202 to 241, and 245 to 284; these read GHVA…QFWP, CHAG…NKVG, AHTN…GEAY, and GHNG…VETP. The FYVE-type zinc-finger motif lies at 286 to 357; it reads WKTSDCCQKC…ICNDCAGRMK (72 aa). Positions 292, 295, 319, 322, 327, 330, 349, and 352 each coordinate Zn(2+). A WD 5 repeat occupies 373-412; the sequence is EIRTGITAMHLQETLGLLVTSGQNRVVMIWDVRSVCSAPS.

Functionally, plays a role in coelomocyte endocytosis. This Caenorhabditis briggsae protein is WD repeat and FYVE domain-containing protein 2.